The sequence spans 388 residues: Chorismate synthase (388 aa).

Positions 39 and 45 each coordinate NADP(+). FMN-binding positions include 130 to 132 (RSS), 251 to 252 (NA), Gly-296, 311 to 315 (KPIPT), and Arg-337.

It belongs to the chorismate synthase family. In terms of assembly, homotetramer. It depends on FMNH2 as a cofactor.

The catalysed reaction is 5-O-(1-carboxyvinyl)-3-phosphoshikimate = chorismate + phosphate. Its pathway is metabolic intermediate biosynthesis; chorismate biosynthesis; chorismate from D-erythrose 4-phosphate and phosphoenolpyruvate: step 7/7. Its function is as follows. Catalyzes the anti-1,4-elimination of the C-3 phosphate and the C-6 proR hydrogen from 5-enolpyruvylshikimate-3-phosphate (EPSP) to yield chorismate, which is the branch point compound that serves as the starting substrate for the three terminal pathways of aromatic amino acid biosynthesis. This reaction introduces a second double bond into the aromatic ring system. This is Chorismate synthase from Lactococcus lactis subsp. cremoris (strain MG1363).